A 591-amino-acid chain; its full sequence is Aspartate--tRNA(Asp/Asn) ligase (591 aa).

Glutamate 174 serves as a coordination point for L-aspartate. Residues 198–201 (QLFK) form an aspartate region. Residue arginine 220 participates in L-aspartate binding. ATP is bound by residues 220–222 (RDE) and glutamine 229. Histidine 450 contributes to the L-aspartate binding site. Glutamate 483 serves as a coordination point for ATP. Arginine 490 provides a ligand contact to L-aspartate. 535 to 538 (GLDR) is an ATP binding site.

The protein belongs to the class-II aminoacyl-tRNA synthetase family. Type 1 subfamily. As to quaternary structure, homodimer.

The protein resides in the cytoplasm. The catalysed reaction is tRNA(Asx) + L-aspartate + ATP = L-aspartyl-tRNA(Asx) + AMP + diphosphate. In terms of biological role, aspartyl-tRNA synthetase with relaxed tRNA specificity since it is able to aspartylate not only its cognate tRNA(Asp) but also tRNA(Asn). Reaction proceeds in two steps: L-aspartate is first activated by ATP to form Asp-AMP and then transferred to the acceptor end of tRNA(Asp/Asn). The polypeptide is Aspartate--tRNA(Asp/Asn) ligase (Azotobacter vinelandii (strain DJ / ATCC BAA-1303)).